An 867-amino-acid chain; its full sequence is uncharacterized protein (867 aa).

Positions 76–108 (CDFCRQKKIRCDMDQSPRPGNACINCRKHHLDC) form a DNA-binding region, zn(2)-C6 fungal-type. Disordered stretches follow at residues 110–167 (FTRT…ITPV) and 217–257 (PQLA…NSNL). Polar residues-rich tracts occupy residues 137 to 167 (SAKS…ITPV) and 248 to 257 (SISSYTNSNL).

The protein localises to the nucleus. This is an uncharacterized protein from Schizosaccharomyces pombe (strain 972 / ATCC 24843) (Fission yeast).